A 649-amino-acid chain; its full sequence is Echinoderm microtubule-associated protein-like 2 (649 aa).

Positions Lys10–Ala649 are tandem atypical propeller in EMLs. WD repeat units follow at residues Lys56–Val93, Arg97–Ser144, His151–Trp192, Glu195–Leu234, Lys241–Lys280, Ile285–Ser323, Phe369–Ser406, Gln410–Thr447, Leu452–Val489, Lys495–Pro535, Phe564–Tyr602, and Ala609–Val648. A coiled-coil region spans residues Gly65–Asp106.

It belongs to the WD repeat EMAP family. In terms of assembly, interacts with GRID2 and may also interact with GRID1. Interacts with EML3. Binds unpolymerized tubulins via its WD repeat region.

The protein localises to the cytoplasm. It is found in the cytoskeleton. It localises to the spindle. Tubulin binding protein that inhibits microtubule nucleation and growth, resulting in shorter microtubules. In Mus musculus (Mouse), this protein is Echinoderm microtubule-associated protein-like 2 (Eml2).